We begin with the raw amino-acid sequence, 611 residues long: Broad-specificity linear acyl-CoA dehydrogenase FadE5 (611 aa).

FAD-binding positions include 162–165, serine 171, and threonine 198; that span reads MVLT. Position 171 (serine 171) interacts with a 2,3-saturated acyl-CoA. Residues 224 to 225 and arginine 301 contribute to the a 2,3-saturated acyl-CoA site; that span reads TK. Position 326 (arginine 326) interacts with FAD. Lysine 338 provides a ligand contact to a 2,3-saturated acyl-CoA. 420–424 lines the FAD pocket; it reads QTLGG. Glutamate 447 is an a 2,3-saturated acyl-CoA binding site. Glutamate 447 (proton acceptor) is an active-site residue. Threonine 449 is a binding site for FAD. A 2,3-saturated acyl-CoA is bound by residues aspartate 456 and 460–461; that span reads RK.

This sequence belongs to the acyl-CoA dehydrogenase family. In terms of assembly, homodimer. The cofactor is FAD.

It catalyses the reaction a long-chain 2,3-saturated fatty acyl-CoA + oxidized [electron-transfer flavoprotein] + H(+) = a long-chain (2E)-enoyl-CoA + reduced [electron-transfer flavoprotein]. The catalysed reaction is a medium-chain 2,3-saturated fatty acyl-CoA + oxidized [electron-transfer flavoprotein] + H(+) = a medium-chain (2E)-enoyl-CoA + reduced [electron-transfer flavoprotein]. It carries out the reaction a short-chain 2,3-saturated fatty acyl-CoA + oxidized [electron-transfer flavoprotein] + H(+) = a short-chain (2E)-enoyl-CoA + reduced [electron-transfer flavoprotein]. The enzyme catalyses octadecanoyl-CoA + oxidized [electron-transfer flavoprotein] + H(+) = (2E)-octadecenoyl-CoA + reduced [electron-transfer flavoprotein]. It catalyses the reaction oxidized [electron-transfer flavoprotein] + hexadecanoyl-CoA + H(+) = (2E)-hexadecenoyl-CoA + reduced [electron-transfer flavoprotein]. The catalysed reaction is dodecanoyl-CoA + oxidized [electron-transfer flavoprotein] + H(+) = (2E)-dodecenoyl-CoA + reduced [electron-transfer flavoprotein]. It carries out the reaction decanoyl-CoA + oxidized [electron-transfer flavoprotein] + H(+) = (2E)-decenoyl-CoA + reduced [electron-transfer flavoprotein]. The enzyme catalyses hexanoyl-CoA + oxidized [electron-transfer flavoprotein] + H(+) = (2E)-hexenoyl-CoA + reduced [electron-transfer flavoprotein]. It catalyses the reaction butanoyl-CoA + oxidized [electron-transfer flavoprotein] + H(+) = (2E)-butenoyl-CoA + reduced [electron-transfer flavoprotein]. Its pathway is lipid metabolism; fatty acid metabolism. Acyl-CoA dehydrogenase that exhibits broad specificity for linear acyl-CoA substrates, with a preference for long-chain substrates. The sequence is that of Broad-specificity linear acyl-CoA dehydrogenase FadE5 from Mycobacterium tuberculosis (strain ATCC 25618 / H37Rv).